We begin with the raw amino-acid sequence, 250 residues long: Triosephosphate isomerase (250 aa).

A substrate-binding site is contributed by 9–11 (NWK). His96 (electrophile) is an active-site residue. Glu168 (proton acceptor) is an active-site residue. Substrate is bound by residues Gly174, Ser216, and 237–238 (GG).

This sequence belongs to the triosephosphate isomerase family. As to quaternary structure, homodimer.

The protein resides in the cytoplasm. The enzyme catalyses D-glyceraldehyde 3-phosphate = dihydroxyacetone phosphate. Its pathway is carbohydrate biosynthesis; gluconeogenesis. It functions in the pathway carbohydrate degradation; glycolysis; D-glyceraldehyde 3-phosphate from glycerone phosphate: step 1/1. Involved in the gluconeogenesis. Catalyzes stereospecifically the conversion of dihydroxyacetone phosphate (DHAP) to D-glyceraldehyde-3-phosphate (G3P). The polypeptide is Triosephosphate isomerase (Leptospira interrogans serogroup Icterohaemorrhagiae serovar copenhageni (strain Fiocruz L1-130)).